The following is a 352-amino-acid chain: RNA 3'-terminal phosphate cyclase (352 aa).

Residues Gln-100 and 297–301 (HLADQ) contribute to the ATP site. His-322 (tele-AMP-histidine intermediate) is an active-site residue.

The protein belongs to the RNA 3'-terminal cyclase family. Type 1 subfamily.

It is found in the cytoplasm. The catalysed reaction is a 3'-end 3'-phospho-ribonucleotide-RNA + ATP = a 3'-end 2',3'-cyclophospho-ribonucleotide-RNA + AMP + diphosphate. Its function is as follows. Catalyzes the conversion of 3'-phosphate to a 2',3'-cyclic phosphodiester at the end of RNA. The mechanism of action of the enzyme occurs in 3 steps: (A) adenylation of the enzyme by ATP; (B) transfer of adenylate to an RNA-N3'P to produce RNA-N3'PP5'A; (C) and attack of the adjacent 2'-hydroxyl on the 3'-phosphorus in the diester linkage to produce the cyclic end product. The biological role of this enzyme is unknown but it is likely to function in some aspects of cellular RNA processing. In Methanosarcina mazei (strain ATCC BAA-159 / DSM 3647 / Goe1 / Go1 / JCM 11833 / OCM 88) (Methanosarcina frisia), this protein is RNA 3'-terminal phosphate cyclase.